The following is a 40-amino-acid chain: Photosystem II reaction center protein J (40 aa).

A helical transmembrane segment spans residues 8 to 28; that stretch reads IPLWIIGTVAGIPVIGLIGIF.

This sequence belongs to the PsbJ family. PSII is composed of 1 copy each of membrane proteins PsbA, PsbB, PsbC, PsbD, PsbE, PsbF, PsbH, PsbI, PsbJ, PsbK, PsbL, PsbM, PsbT, PsbX, PsbY, PsbZ, Psb30/Ycf12, at least 3 peripheral proteins of the oxygen-evolving complex and a large number of cofactors. It forms dimeric complexes.

It is found in the plastid. The protein resides in the chloroplast thylakoid membrane. In terms of biological role, one of the components of the core complex of photosystem II (PSII). PSII is a light-driven water:plastoquinone oxidoreductase that uses light energy to abstract electrons from H(2)O, generating O(2) and a proton gradient subsequently used for ATP formation. It consists of a core antenna complex that captures photons, and an electron transfer chain that converts photonic excitation into a charge separation. In Pelargonium hortorum (Common geranium), this protein is Photosystem II reaction center protein J.